Consider the following 573-residue polypeptide: Squalene monooxygenase (573 aa).

At 1–19 (MWTFLGIATFTYFYKKCGD) the chain is on the cytoplasmic side. Residues 1–99 (MWTFLGIATF…EQLESKRRRK (99 aa)) are interaction with MARCHF6. An intramembrane segment occupies 20–40 (VTLANKELLLCVLVFLSLGLV). The Cytoplasmic portion of the chain corresponds to 41-573 (LSYRCRHRNG…IYSEMKYLVH (533 aa)). Residues 61–72 (QFAAFSDILSAL) form a required for degradation in response to high membrane cholesterol levels region. Positions 100–573 (EVNLSETTLT…IYSEMKYLVH (474 aa)) are sufficient for catalytic activity. FAD-binding positions include 132–133 (VL), 152–153 (ER), Arg160, Arg233, Val249, Asp407, and Met420. Residues 515-573 (PLLLIRHFFSVAVYATYFCFKSEPWATKPRALFSSGAILYKACSIIFPLIYSEMKYLVH) are hydrophobic; mediates interaction with membranes.

It belongs to the squalene monooxygenase family. In terms of assembly, interacts (via N-terminal domain) with MARCHF6. Interacts with SMIM22; this interaction modulates lipid droplet formation. FAD is required as a cofactor. Ubiquitinated by MARCHF6 in response to high cholesterol levels in intracellular membranes, leading to proteasomal degradation. In terms of tissue distribution, detected in lever (at protein level).

It is found in the microsome membrane. The protein localises to the endoplasmic reticulum membrane. The enzyme catalyses squalene + reduced [NADPH--hemoprotein reductase] + O2 = (S)-2,3-epoxysqualene + oxidized [NADPH--hemoprotein reductase] + H2O + H(+). The protein operates within terpene metabolism; lanosterol biosynthesis; lanosterol from farnesyl diphosphate: step 2/3. Inhibited by NB-598 ((E)N-ethyl-N-(6,6-dimethyl-2-hepten-4-ynyl)-3-[(3,3'-bi-thiophen-5-yl)methoxy]benzene-methanamine). Contrary to fungal enzymes, the mammalian enzyme is only slightly inhibited by terbinafine. In terms of biological role, catalyzes the stereospecific oxidation of squalene to (S)-2,3-epoxysqualene, and is considered to be a rate-limiting enzyme in steroid biosynthesis. The chain is Squalene monooxygenase (Sqle) from Rattus norvegicus (Rat).